Here is an 82-residue protein sequence, read N- to C-terminus: uncharacterized protein (82 aa).

Helical transmembrane passes span 1-21, 22-42, and 62-82; these read MSAS…SVST, VLLG…LAAF, and WRLL…LTLL.

It localises to the cell membrane. This is an uncharacterized protein from Stutzerimonas stutzeri (Pseudomonas stutzeri).